A 151-amino-acid chain; its full sequence is Transcriptional repressor NrdR (151 aa).

A zinc finger lies at 3 to 34 (CPKCGSLNDKVLETRQSKEGVVIKRRRECLNC). The ATP-cone domain maps to 49 to 139 (IEVIKKNNTV…VFDGFEDIKD (91 aa)).

This sequence belongs to the NrdR family. It depends on Zn(2+) as a cofactor.

Negatively regulates transcription of bacterial ribonucleotide reductase nrd genes and operons by binding to NrdR-boxes. In Sulfurihydrogenibium sp. (strain YO3AOP1), this protein is Transcriptional repressor NrdR.